The following is a 90-amino-acid chain: Small ribosomal subunit protein bS16 (90 aa).

The protein belongs to the bacterial ribosomal protein bS16 family.

This Listeria innocua serovar 6a (strain ATCC BAA-680 / CLIP 11262) protein is Small ribosomal subunit protein bS16.